The following is a 268-amino-acid chain: Glutamate racemase (268 aa).

Substrate-binding positions include 9-10 (DS) and 41-42 (YG). Catalysis depends on cysteine 73, which acts as the Proton donor/acceptor. 74–75 (NS) is a binding site for substrate. The Proton donor/acceptor role is filled by cysteine 183. 184–185 (TH) contributes to the substrate binding site.

This sequence belongs to the aspartate/glutamate racemases family.

It carries out the reaction L-glutamate = D-glutamate. It participates in cell wall biogenesis; peptidoglycan biosynthesis. Functionally, provides the (R)-glutamate required for cell wall biosynthesis. This Shewanella piezotolerans (strain WP3 / JCM 13877) protein is Glutamate racemase.